We begin with the raw amino-acid sequence, 429 residues long: Palmitoyltransferase ZDHHC23 (429 aa).

Topologically, residues Met1 to Lys81 are cytoplasmic. A helical membrane pass occupies residues Val82 to Trp102. A topological domain (lumenal) is located at residue His103. Residues Phe104–Leu124 form a helical membrane-spanning segment. Residues Thr125–Glu130 are Cytoplasmic-facing. A helical membrane pass occupies residues Gln131–Leu151. The Lumenal portion of the chain corresponds to Gln152–His159. Residues Val160–Tyr180 form a helical membrane-spanning segment. At Arg181–Gln296 the chain is on the cytoplasmic side. The interval Gln212–Pro247 is disordered. Positions Thr221–Arg230 are enriched in polar residues. A DHHC domain is found at Asp253–Ser303. The active-site S-palmitoyl cysteine intermediate is Cys283. The chain crosses the membrane as a helical span at residues Ala297–Leu317. Topologically, residues Asn318–Thr347 are lumenal. Residues Cys348 to Ile368 traverse the membrane as a helical segment. The Cytoplasmic segment spans residues Asn369–Val429. An interaction with NOS1 region spans residues Glu426 to Val429.

This sequence belongs to the DHHC palmitoyltransferase family. As to quaternary structure, interacts with NOS1. In terms of tissue distribution, expressed in the brain (at protein level), with highest levels in olfactory bulb, piriform cortex and hippocampus.

The protein localises to the golgi apparatus membrane. The protein resides in the golgi apparatus. It localises to the trans-Golgi network membrane. The catalysed reaction is L-cysteinyl-[protein] + hexadecanoyl-CoA = S-hexadecanoyl-L-cysteinyl-[protein] + CoA. Palmitoyltransferase that could catalyze the addition of palmitate onto various protein substrates and be involved in a variety of cellular processes. Palmitoyltransferase that mediates palmitoylation of KCNMA1, regulating localization of KCNMA1 to the plasma membrane. May be involved in NOS1 regulation and targeting to the synaptic membrane. This is Palmitoyltransferase ZDHHC23 from Rattus norvegicus (Rat).